The chain runs to 599 residues: Elongation factor 4 (599 aa).

Positions 4–186 (EHIRNFSIIA…EIVKKIPPPQ (183 aa)) constitute a tr-type G domain. GTP is bound by residues 16–21 (DHGKST) and 133–136 (NKID).

Belongs to the TRAFAC class translation factor GTPase superfamily. Classic translation factor GTPase family. LepA subfamily.

It is found in the cell inner membrane. The enzyme catalyses GTP + H2O = GDP + phosphate + H(+). Its function is as follows. Required for accurate and efficient protein synthesis under certain stress conditions. May act as a fidelity factor of the translation reaction, by catalyzing a one-codon backward translocation of tRNAs on improperly translocated ribosomes. Back-translocation proceeds from a post-translocation (POST) complex to a pre-translocation (PRE) complex, thus giving elongation factor G a second chance to translocate the tRNAs correctly. Binds to ribosomes in a GTP-dependent manner. This Geobacter sp. (strain M21) protein is Elongation factor 4.